Here is a 222-residue protein sequence, read N- to C-terminus: Glutathione S-transferase alpha M14 (222 aa).

Residue methionine 1 is modified to N-acetylmethionine. Alanine 2 bears the N-acetylalanine; in Glutathione S-transferase alpha M14, N-terminally processed mark. One can recognise a GST N-terminal domain in the interval glycine 3–glycine 83. Lysine 4 bears the N6-succinyllysine mark. Residues tyrosine 9, glutamine 54–valine 55, and glutamine 67–threonine 68 contribute to the glutathione site. The 124-residue stretch at aspartate 85–methionine 208 folds into the GST C-terminal domain. Residues glutamine 199–aspartate 222 are disordered. Residues proline 206–aspartate 222 show a composition bias toward basic and acidic residues.

Belongs to the GST superfamily. Alpha family. As to quaternary structure, homodimer or heterodimer of GSTA1 and GSTA2.

Its subcellular location is the cytoplasm. It catalyses the reaction RX + glutathione = an S-substituted glutathione + a halide anion + H(+). It carries out the reaction prostaglandin A2 + glutathione = prostaglandin A2-S-(R)-glutathione. The enzyme catalyses prostaglandin J2 + glutathione = prostaglandin J2-S-(R)-glutathione. The catalysed reaction is (13S)-hydroperoxy-(9Z,11E)-octadecadienoate + 2 glutathione = (13S)-hydroxy-(9Z,11E)-octadecadienoate + glutathione disulfide + H2O. It catalyses the reaction androst-5-ene-3,17-dione = androst-4-ene-3,17-dione. Functionally, glutathione S-transferase that catalyzes the nucleophilic attack of the sulfur atom of glutathione on the electrophilic groups of a wide range of exogenous and endogenous compounds. Involved in the formation of glutathione conjugates of both prostaglandin A2 (PGA2) and prostaglandin J2 (PGJ2). It also catalyzes the isomerization of D5-androstene-3,17-dione (AD) into D4-androstene-3,17-dione and may therefore play an important role in hormone biosynthesis. Through its glutathione-dependent peroxidase activity toward the fatty acid hydroperoxide (13S)-hydroperoxy-(9Z,11E)-octadecadienoate/13-HPODE it is also involved in the metabolism of oxidized linoleic acid. The polypeptide is Glutathione S-transferase alpha M14 (Sus scrofa (Pig)).